Reading from the N-terminus, the 165-residue chain is Cell division protein SepF (165 aa).

The segment at 23–75 (DEYGDYAGDYETQETAPVATRSSKRESRPAPVSDLSERRRPASGPTGVVAELS) is disordered.

The protein belongs to the SepF family. Homodimer. Interacts with FtsZ.

Its subcellular location is the cytoplasm. In terms of biological role, cell division protein that is part of the divisome complex and is recruited early to the Z-ring. Probably stimulates Z-ring formation, perhaps through the cross-linking of FtsZ protofilaments. Its function overlaps with FtsA. The protein is Cell division protein SepF of Nocardioides sp. (strain ATCC BAA-499 / JS614).